The primary structure comprises 421 residues: Ig-like V-type domain-containing protein FAM187A (421 aa).

The first 18 residues, Met-1–Ala-18, serve as a signal peptide directing secretion. Residues Phe-19 to Ala-377 lie on the Extracellular side of the membrane. One can recognise an Ig-like V-type domain in the interval Pro-268–Ser-362. Cysteines 290 and 346 form a disulfide. N-linked (GlcNAc...) asparagine glycosylation occurs at Asn-318. A helical transmembrane segment spans residues Ala-378–Leu-398. The Cytoplasmic segment spans residues Cys-399–Leu-421.

It belongs to the FAM187 family.

It is found in the membrane. In Bos taurus (Bovine), this protein is Ig-like V-type domain-containing protein FAM187A (FAM187A).